The primary structure comprises 408 residues: Eukaryotic initiation factor 4A-II (408 aa).

The disordered stretch occupies residues 1-22; that stretch reads MSGGSADYNSREHGGPEGMDPD. The Q motif signature appears at 34 to 62; sequence DNFDDMNLKESLLRGIYAYGFEKPSAIQQ. Residues 65 to 236 form the Helicase ATP-binding domain; it reads IIPCIKGYDV…KKFMRDPIRI (172 aa). 77 to 84 provides a ligand contact to ATP; it reads QAQSGTGK. At Thr-160 the chain carries Phosphothreonine. The DEAD box motif lies at 183–186; that stretch reads LDEA. A Helicase C-terminal domain is found at 247–408; it reads GIKQFYINVE…EMPMNVADLI (162 aa).

Belongs to the DEAD box helicase family. eIF4A subfamily. As to quaternary structure, eIF4F is a multi-subunit complex, the composition of which varies with external and internal environmental conditions. It is composed of at least EIF4A, EIF4E and EIF4G1/EIFFG3. Interacts with EIF4E. May interact with NOM1.

It carries out the reaction ATP + H2O = ADP + phosphate + H(+). Functionally, ATP-dependent RNA helicase which is a subunit of the eIF4F complex involved in cap recognition and is required for mRNA binding to ribosome. In the current model of translation initiation, eIF4A unwinds RNA secondary structures in the 5'-UTR of mRNAs which is necessary to allow efficient binding of the small ribosomal subunit, and subsequent scanning for the initiator codon. The chain is Eukaryotic initiation factor 4A-II (EIF4A2) from Macaca fascicularis (Crab-eating macaque).